The following is a 136-amino-acid chain: ATP synthase epsilon chain, plastid (136 aa).

It belongs to the ATPase epsilon chain family. As to quaternary structure, F-type ATPases have 2 components, CF(1) - the catalytic core - and CF(0) - the membrane proton channel. CF(1) has five subunits: alpha(3), beta(3), gamma(1), delta(1), epsilon(1). CF(0) has three main subunits: a, b and c.

It is found in the plastid thylakoid membrane. Produces ATP from ADP in the presence of a proton gradient across the membrane. This chain is ATP synthase epsilon chain, plastid, found in Cuscuta reflexa (Southern Asian dodder).